A 51-amino-acid polypeptide reads, in one-letter code: Astexin-1 (51 aa).

A propeptide spanning residues 1-28 (MHTPIISETVQPKTAGLIVLGKASAETR) is cleaved from the precursor. A cross-link (isoaspartyl glycine isopeptide (Gly-Asp)) is located at residues 29–37 (GLSQGVEPD).

In terms of processing, this lasso peptide is probably hydrolyzed to a linear form by the isopeptidase AtxE1, in vivo.

Functionally, shows weak antimicrobial activity against its phylogenetic relative Caulobacter crescentus. Does not show activity against other bacteria tested (E.coli, Vibrio sp, Burkhoderia thailandensis, and Salmonella newport). The chain is Astexin-1 from Asticcacaulis excentricus (strain ATCC 15261 / DSM 4724 / KCTC 12464 / NCIMB 9791 / VKM B-1370 / CB 48).